A 141-amino-acid polypeptide reads, in one-letter code: Hemoglobin subunit zeta (141 aa).

Position 1 is an N-acetylserine (Ser1). The region spanning 1 to 141 (SLTKAERTII…VSGVLTEKYR (141 aa)) is the Globin domain. Thr28 carries the phosphothreonine modification. Ser52 is modified (phosphoserine). His58 lines the heme b pocket. Ser72 is subject to Phosphoserine. His87 is a binding site for heme b.

Belongs to the globin family. In terms of assembly, heterotetramer of two zeta chains and two epsilon chains.

Its function is as follows. The zeta chain is an alpha-type chain of mammalian embryonic hemoglobin. The sequence is that of Hemoglobin subunit zeta from Sus scrofa (Pig).